A 360-amino-acid chain; its full sequence is 3-dehydroquinate synthase (360 aa).

Residues 71–76, 105–109, 129–130, K142, and K151 each bind NAD(+); these read DGEAHK, GVVGD, and TT. Zn(2+) contacts are provided by E184, H247, and H264.

Belongs to the sugar phosphate cyclases superfamily. Dehydroquinate synthase family. Co(2+) is required as a cofactor. Requires Zn(2+) as cofactor. The cofactor is NAD(+).

The protein localises to the cytoplasm. The catalysed reaction is 7-phospho-2-dehydro-3-deoxy-D-arabino-heptonate = 3-dehydroquinate + phosphate. It participates in metabolic intermediate biosynthesis; chorismate biosynthesis; chorismate from D-erythrose 4-phosphate and phosphoenolpyruvate: step 2/7. Its function is as follows. Catalyzes the conversion of 3-deoxy-D-arabino-heptulosonate 7-phosphate (DAHP) to dehydroquinate (DHQ). This Azoarcus sp. (strain BH72) protein is 3-dehydroquinate synthase.